The primary structure comprises 229 residues: Large ribosomal subunit protein uL1 (229 aa).

Belongs to the universal ribosomal protein uL1 family. As to quaternary structure, part of the 50S ribosomal subunit.

Functionally, binds directly to 23S rRNA. The L1 stalk is quite mobile in the ribosome, and is involved in E site tRNA release. Its function is as follows. Protein L1 is also a translational repressor protein, it controls the translation of the L11 operon by binding to its mRNA. The polypeptide is Large ribosomal subunit protein uL1 (Actinobacillus pleuropneumoniae serotype 3 (strain JL03)).